The following is a 298-amino-acid chain: MAAAAAAVAGAGRGGGGGGGGGGAADPGQERSRARSWVGAERSEGRRMEPNEELEEEDSPGGREDGFTAEHLAAEAMAADMDPWLVFDARTTPATELDAWLAKYPPSQVTRYGDPGSPNSEPVGWIAAYGQGYTPNSGDVQGLQAAWEALQTSGRPITPGTLRQLAITHHVLSGKWLIHLSPGFKLDHAWAGIARAVVEGRLQVAKVSPRAKEGGRQVICVYTDDFTDRLGVLEADSAIRAAGIKCLLTYKPDVYTYLGIYRANRWHLCPTLYESRFQLGGNTRGSRVLDRANNVELT.

Over residues 1-10 the composition is skewed to low complexity; that stretch reads MAAAAAAVAG. The tract at residues 1–66 is disordered; the sequence is MAAAAAAVAG…EDSPGGREDG (66 aa). Residues 11–25 are compositionally biased toward gly residues; sequence AGRGGGGGGGGGGAA. Residues 41 to 50 show a composition bias toward basic and acidic residues; that stretch reads ERSEGRRMEP.

It belongs to the UPF0696 family.

This is UPF0696 protein C11orf68 homolog (Bles03) from Mus musculus (Mouse).